Here is an 80-residue protein sequence, read N- to C-terminus: Large ribosomal subunit protein bL31B (80 aa).

Belongs to the bacterial ribosomal protein bL31 family. Type B subfamily. As to quaternary structure, part of the 50S ribosomal subunit.

This chain is Large ribosomal subunit protein bL31B, found in Streptococcus thermophilus (strain CNRZ 1066).